The sequence spans 504 residues: Beta-xylosidase (504 aa).

Glu160 serves as the catalytic Proton donor. Residue Glu280 is the Nucleophile of the active site.

The protein belongs to the glycosyl hydrolase 39 family.

The enzyme catalyses Hydrolysis of (1-&gt;4)-beta-D-xylans, to remove successive D-xylose residues from the non-reducing termini.. This chain is Beta-xylosidase (xynB), found in Geobacillus stearothermophilus (Bacillus stearothermophilus).